Consider the following 609-residue polypeptide: Laccase-1 (609 aa).

The N-terminal stretch at 1–20 (MYLSTVLFPLLALNLGLSHA) is a signal peptide. One can recognise a Plastocyanin-like 1 domain in the interval 45–141 (VFTNGEYPGP…DGQVGAMYIR (97 aa)). Asparagine 75 is a glycosylation site (N-linked (GlcNAc...) asparagine). Cu cation contacts are provided by histidine 79, histidine 81, histidine 123, and histidine 125. Residue asparagine 257 is glycosylated (N-linked (GlcNAc...) asparagine). Residues 270 to 372 (TPSSVEPPVI…MSVYAILSYV (103 aa)) enclose the Plastocyanin-like 2 domain. Residues asparagine 403, asparagine 443, and asparagine 486 are each glycosylated (N-linked (GlcNAc...) asparagine). The Plastocyanin-like 3 domain occupies 463–602 (STPLLFEPDP…MGGMALALLD (140 aa)). Residues histidine 508, histidine 511, and histidine 513 each coordinate Cu cation. Asparagine 531 and asparagine 546 each carry an N-linked (GlcNAc...) asparagine glycan. Residues histidine 585, cysteine 586, histidine 587, and histidine 591 each coordinate Cu cation.

It belongs to the multicopper oxidase family. Requires Cu cation as cofactor.

It is found in the secreted. The catalysed reaction is 4 hydroquinone + O2 = 4 benzosemiquinone + 2 H2O. Its function is as follows. Required for the conversion of the yellow polyketide pigment synthesized by wA to the conidial green pigment. This Emericella nidulans (strain FGSC A4 / ATCC 38163 / CBS 112.46 / NRRL 194 / M139) (Aspergillus nidulans) protein is Laccase-1 (yA).